Consider the following 505-residue polypeptide: DNA primase DnaG (505 aa).

One can recognise a Toprim domain in the interval 167 to 241 (DAVIVVEGRA…DVDYVAFAPP (75 aa)). Glu173, Asp215, and Asp217 together coordinate Mg(2+). A disordered region spans residues 268 to 410 (DEPNLREAAT…PLDNEPRSIE (143 aa)). Residues 318-327 (AGVVAGGARS) are compositionally biased toward low complexity. Acidic residues-rich tracts occupy residues 349–376 (GEVDEVGEDREGDMESDSDTADINDAEF) and 384–402 (PNLDEAADAESVEETDAPL).

This sequence belongs to the archaeal DnaG primase family. In terms of assembly, forms a ternary complex with MCM helicase and DNA. It depends on Mg(2+) as a cofactor.

The enzyme catalyses ssDNA + n NTP = ssDNA/pppN(pN)n-1 hybrid + (n-1) diphosphate.. In terms of biological role, RNA polymerase that catalyzes the synthesis of short RNA molecules used as primers for DNA polymerase during DNA replication. The chain is DNA primase DnaG from Halorubrum lacusprofundi (strain ATCC 49239 / DSM 5036 / JCM 8891 / ACAM 34).